A 106-amino-acid chain; its full sequence is Small ribosomal subunit protein uS10 (106 aa).

This sequence belongs to the universal ribosomal protein uS10 family. Part of the 30S ribosomal subunit.

In terms of biological role, involved in the binding of tRNA to the ribosomes. The sequence is that of Small ribosomal subunit protein uS10 from Synechococcus sp. (strain CC9902).